The following is a 97-amino-acid chain: Integration host factor subunit alpha (97 aa).

It belongs to the bacterial histone-like protein family. As to quaternary structure, heterodimer of an alpha and a beta chain.

Functionally, this protein is one of the two subunits of integration host factor, a specific DNA-binding protein that functions in genetic recombination as well as in transcriptional and translational control. The polypeptide is Integration host factor subunit alpha (Acinetobacter baylyi (strain ATCC 33305 / BD413 / ADP1)).